A 94-amino-acid polypeptide reads, in one-letter code: CRISPR-associated endoribonuclease Cas2 (94 aa).

Mg(2+) is bound at residue Asp-11.

This sequence belongs to the CRISPR-associated endoribonuclease Cas2 protein family. In terms of assembly, homodimer, forms a heterotetramer with a Cas1 homodimer. The cofactor is Mg(2+).

CRISPR (clustered regularly interspaced short palindromic repeat), is an adaptive immune system that provides protection against mobile genetic elements (viruses, transposable elements and conjugative plasmids). CRISPR clusters contain sequences complementary to antecedent mobile elements and target invading nucleic acids. CRISPR clusters are transcribed and processed into CRISPR RNA (crRNA). Functions as a ssRNA-specific endoribonuclease. Involved in the integration of spacer DNA into the CRISPR cassette. The chain is CRISPR-associated endoribonuclease Cas2 from Thermus thermophilus (strain ATCC 27634 / DSM 579 / HB8).